Reading from the N-terminus, the 386-residue chain is Outer membrane protein assembly factor BamB (386 aa).

An N-terminal signal peptide occupies residues 1 to 25; the sequence is MMRNSRPGRAWRGAVVLTGLLALSG. Cys-26 carries N-palmitoyl cysteine lipidation. Cys-26 is lipidated: S-diacylglycerol cysteine.

Belongs to the BamB family. As to quaternary structure, part of the Bam complex.

The protein localises to the cell outer membrane. Its function is as follows. Part of the outer membrane protein assembly complex, which is involved in assembly and insertion of beta-barrel proteins into the outer membrane. The polypeptide is Outer membrane protein assembly factor BamB (Bordetella pertussis (strain Tohama I / ATCC BAA-589 / NCTC 13251)).